The sequence spans 1388 residues: Dicer-like protein 2 (1388 aa).

One can recognise a Helicase ATP-binding domain in the interval Met-23 to Ala-203. Met-36–Thr-43 serves as a coordination point for ATP. The DEAH box motif lies at Asp-144–His-147. The Helicase C-terminal domain occupies Ser-371–Ser-537. Residues Ala-564–Lys-658 form the Dicer dsRNA-binding fold domain. 2 RNase III domains span residues Ala-919–Gly-1059 and Asn-1098–Gly-1281. The Mg(2+) site is built by Glu-1137, Asp-1267, and Glu-1270.

The protein belongs to the helicase family. Dicer subfamily. It depends on Mg(2+) as a cofactor. The cofactor is Mn(2+).

Functionally, dicer-like endonuclease involved in cleaving double-stranded RNA in the RNA interference (RNAi) pathway. Produces 21 to 25 bp dsRNAs (siRNAs) which target the selective destruction of homologous RNAs leading to sequence-specific suppression of gene expression, called post-transcriptional gene silencing (PTGS). Part of a broad host defense response against viral infection and transposons. The protein is Dicer-like protein 2 (dcl2) of Neosartorya fischeri (strain ATCC 1020 / DSM 3700 / CBS 544.65 / FGSC A1164 / JCM 1740 / NRRL 181 / WB 181) (Aspergillus fischerianus).